A 431-amino-acid polypeptide reads, in one-letter code: Serine--tRNA ligase (431 aa).

An L-serine-binding site is contributed by 238–240 (TAE). 269-271 (RSE) contributes to the ATP binding site. Glutamate 292 is a binding site for L-serine. 356 to 359 (EISS) provides a ligand contact to ATP. Position 391 (serine 391) interacts with L-serine.

This sequence belongs to the class-II aminoacyl-tRNA synthetase family. Type-1 seryl-tRNA synthetase subfamily. As to quaternary structure, homodimer. The tRNA molecule binds across the dimer.

It is found in the cytoplasm. It carries out the reaction tRNA(Ser) + L-serine + ATP = L-seryl-tRNA(Ser) + AMP + diphosphate + H(+). The catalysed reaction is tRNA(Sec) + L-serine + ATP = L-seryl-tRNA(Sec) + AMP + diphosphate + H(+). It participates in aminoacyl-tRNA biosynthesis; selenocysteinyl-tRNA(Sec) biosynthesis; L-seryl-tRNA(Sec) from L-serine and tRNA(Sec): step 1/1. Its function is as follows. Catalyzes the attachment of serine to tRNA(Ser). Is also able to aminoacylate tRNA(Sec) with serine, to form the misacylated tRNA L-seryl-tRNA(Sec), which will be further converted into selenocysteinyl-tRNA(Sec). The sequence is that of Serine--tRNA ligase from Bdellovibrio bacteriovorus (strain ATCC 15356 / DSM 50701 / NCIMB 9529 / HD100).